A 325-amino-acid chain; its full sequence is Serpentine receptor class gamma-16 (325 aa).

A run of 7 helical transmembrane segments spans residues Phe25–Ile45, Val65–Pro85, Leu87–Trp107, Leu144–Leu164, Trp187–Ile207, Phe232–Val252, and Leu264–Leu284.

Belongs to the nematode receptor-like protein srg family.

It localises to the membrane. The sequence is that of Serpentine receptor class gamma-16 (srg-16) from Caenorhabditis elegans.